We begin with the raw amino-acid sequence, 1088 residues long: RNA-directed RNA polymerase (1088 aa).

Residues Leu501–Ile687 enclose the RdRp catalytic domain.

It belongs to the reoviridae RNA-directed RNA polymerase family. As to quaternary structure, interacts with VP3 (Potential). Interacts with VP2; this interaction activates VP1. Interacts with NSP5; this interaction is probably necessary for the formation of functional virus factories. Interacts with NSP2; this interaction is weak. The cofactor is Mg(2+).

It is found in the virion. It carries out the reaction RNA(n) + a ribonucleoside 5'-triphosphate = RNA(n+1) + diphosphate. Functionally, RNA-directed RNA polymerase that is involved in both transcription and genome replication. Together with VP3 capping enzyme, forms an enzyme complex positioned near the channels situated at each of the five-fold vertices of the core. Following infection, the outermost layer of the virus is lost, leaving a double-layered particle (DLP) made up of the core and VP6 shell. VP1 then catalyzes the transcription of fully conservative plus-strand genomic RNAs that are extruded through the DLP's channels into the cytoplasm where they function as mRNAs for translation of viral proteins. One copy of each of the viral (+)RNAs is also recruited during core assembly, together with newly synthesized polymerase complexes and VP2. The polymerase of these novo-formed particles catalyzes the synthesis of complementary minus-strands leading to dsRNA formation. To do so, the polymerase specifically recognizes and binds 4 bases 5'-UGUG-3' in the conserved 3'-sequence of plus-strand RNA templates. VP2 presumably activates the autoinhibited VP1-RNA complex to coordinate packaging and genome replication. Once dsRNA synthesis is complete, the polymerase switches to the transcriptional mode, thus providing secondary transcription. This is RNA-directed RNA polymerase from Rotavirus A (strain RVA/SA11-Patton/G3P[X]) (RV-A).